Reading from the N-terminus, the 291-residue chain is Bis(5'-nucleosyl)-tetraphosphatase, symmetrical (291 aa).

The protein belongs to the Ap4A hydrolase family.

It catalyses the reaction P(1),P(4)-bis(5'-adenosyl) tetraphosphate + H2O = 2 ADP + 2 H(+). In terms of biological role, hydrolyzes diadenosine 5',5'''-P1,P4-tetraphosphate to yield ADP. The polypeptide is Bis(5'-nucleosyl)-tetraphosphatase, symmetrical (Pseudomonas syringae pv. syringae (strain B728a)).